The chain runs to 113 residues: U11-theraphotoxin-Hhn1q (113 aa).

Positions 1 to 21 (MNTVRVTFLLVFVLAVSLGQA) are cleaved as a signal peptide. Residues 22-74 (DKDENRMEMQEKTEQGKSYLDFAENLLLQKLEELEAKLLEEDSEESRNSRQKR) constitute a propeptide that is removed on maturation. The interval 61-82 (EEDSEESRNSRQKRCIGEGVPC) is disordered. 3 cysteine pairs are disulfide-bonded: Cys75-Cys90, Cys82-Cys95, and Cys89-Cys110.

It belongs to the neurotoxin 14 (magi-1) family. 01 (HNTX-16) subfamily. In terms of tissue distribution, expressed by the venom gland.

The protein localises to the secreted. Its function is as follows. Probable ion channel inhibitor. The sequence is that of U11-theraphotoxin-Hhn1q from Cyriopagopus hainanus (Chinese bird spider).